Reading from the N-terminus, the 379-residue chain is L-lactate dehydrogenase (379 aa).

Residues Met1–Pro379 enclose the FMN hydroxy acid dehydrogenase domain. Tyr24 contacts substrate. Positions 106 and 127 each coordinate FMN. Tyr129 serves as a coordination point for substrate. Residue Thr155 coordinates FMN. Arg164 serves as a coordination point for substrate. Residue Lys251 participates in FMN binding. The active-site Proton acceptor is the His275. Residue Arg278 coordinates substrate. Asp306 to Arg330 is an FMN binding site.

The protein belongs to the FMN-dependent alpha-hydroxy acid dehydrogenase family. Requires FMN as cofactor.

It is found in the cell inner membrane. It catalyses the reaction (S)-lactate + A = pyruvate + AH2. Functionally, catalyzes the conversion of L-lactate to pyruvate. Is coupled to the respiratory chain. The chain is L-lactate dehydrogenase from Stenotrophomonas maltophilia (strain R551-3).